The sequence spans 567 residues: DNA ligase B (567 aa).

The active-site N6-AMP-lysine intermediate is lysine 126.

It belongs to the NAD-dependent DNA ligase family. LigB subfamily.

It catalyses the reaction NAD(+) + (deoxyribonucleotide)n-3'-hydroxyl + 5'-phospho-(deoxyribonucleotide)m = (deoxyribonucleotide)n+m + AMP + beta-nicotinamide D-nucleotide.. In terms of biological role, catalyzes the formation of phosphodiester linkages between 5'-phosphoryl and 3'-hydroxyl groups in double-stranded DNA using NAD as a coenzyme and as the energy source for the reaction. The polypeptide is DNA ligase B (Pseudomonas putida (strain W619)).